Consider the following 435-residue polypeptide: Histidine--tRNA ligase (435 aa).

The protein belongs to the class-II aminoacyl-tRNA synthetase family. In terms of assembly, homodimer.

Its subcellular location is the cytoplasm. The catalysed reaction is tRNA(His) + L-histidine + ATP = L-histidyl-tRNA(His) + AMP + diphosphate + H(+). In Synechococcus sp. (strain ATCC 27144 / PCC 6301 / SAUG 1402/1) (Anacystis nidulans), this protein is Histidine--tRNA ligase.